Consider the following 684-residue polypeptide: Fidgetin-like protein 2 (684 aa).

Over residues 27–41 (PEQHLDVSSTTSSPA) the composition is skewed to polar residues. 3 disordered regions span residues 27-48 (PEQH…ELYS), 99-179 (PGAF…PHSS), and 292-403 (LDEE…SDPM). Residues 160-179 (SNLSDSGYSGSSSCSGPHSS) are compositionally biased toward low complexity. Position 431 (Ala431) interacts with ATP.

It belongs to the AAA ATPase family. It depends on Mg(2+) as a cofactor. In terms of tissue distribution, highly expressed in vascular endothelial cells and neuronal cells.

It is found in the cytoplasm. The protein localises to the cell cortex. It catalyses the reaction ATP + H2O = ADP + phosphate + H(+). In terms of biological role, microtubule-severing enzyme that negatively regulates cell migration and wound healing. In migrating cells, targets dynamic microtubules (MTs) at the leading edge and severs them, thereby suppressing motility. Negative regulator of axon regeneration that suppresses axonal growth by selectively severing dynamic MTs in the distal axon shaft and growth cone. Contributes to proper cell branching during endothelial and neuronal development. The protein is Fidgetin-like protein 2 (fignl2) of Danio rerio (Zebrafish).